The following is a 432-amino-acid chain: MRVVILGSGVVGVASAWYLNQAGHEVTVIDREPGAALETSAANAGQISPGYAAPWAAPGVPLKAIKWMFQRHAPLAVRLDGTQFQLKWMWQMLRNCDTSHYMENKGRMVRLAEYSRDCLKALRAETNIQYEGRQGGTLQLFRTEQQYENATRDIVVLEDAGVPYQLLESSRLAEVEPALAEVAHKLTGGLQLPNDETGDCQLFTQNLARMAEQAGVKFRFNTPVDQLLCDGEQIYGVKCGDEVIKADAYVMAFGSYSTAMLKGIVDIPVYPLKGYSLTIPIAQEDGAPVSTILDETYKIAITRFDNRIRVGGMAEIVGFNTELLQPRRETLEMVVRDLYPRGGHVEQATFWTGLRPMTPDGTPVVGRTRFKNLWLNTGHGTLGWTMACGSGQLLSDLLSGRTPAIPYEDLSVARYSRGFTPSRPGHLHGAHS.

3–17 (VVILGSGVVGVASAW) lines the FAD pocket.

Belongs to the DadA oxidoreductase family. FAD is required as a cofactor.

The catalysed reaction is a D-alpha-amino acid + A + H2O = a 2-oxocarboxylate + AH2 + NH4(+). It functions in the pathway amino-acid degradation; D-alanine degradation; NH(3) and pyruvate from D-alanine: step 1/1. In terms of biological role, oxidative deamination of D-amino acids. This is D-amino acid dehydrogenase from Shigella boydii serotype 18 (strain CDC 3083-94 / BS512).